The chain runs to 239 residues: tRNA (guanine-N(7)-)-methyltransferase (239 aa).

A compositionally biased stretch (polar residues) spans 1–13 (MEAEVQQGQQSPE). The disordered stretch occupies residues 1–30 (MEAEVQQGQQSPEGQLEKRPPSPPWAGIPL). S-adenosyl-L-methionine is bound by residues Asp-72, Glu-97, Asn-124, and Asp-147. Asp-147 is a catalytic residue. Substrate-binding residues include Lys-151 and Asp-183.

This sequence belongs to the class I-like SAM-binding methyltransferase superfamily. TrmB family.

It catalyses the reaction guanosine(46) in tRNA + S-adenosyl-L-methionine = N(7)-methylguanosine(46) in tRNA + S-adenosyl-L-homocysteine. It participates in tRNA modification; N(7)-methylguanine-tRNA biosynthesis. Catalyzes the formation of N(7)-methylguanine at position 46 (m7G46) in tRNA. The protein is tRNA (guanine-N(7)-)-methyltransferase of Synechococcus sp. (strain JA-2-3B'a(2-13)) (Cyanobacteria bacterium Yellowstone B-Prime).